The chain runs to 628 residues: Nuclear RNA export factor 1 (628 aa).

The tract at residues 47–83 is disordered; the sequence is DTQSRYEDDDEPAVPVRASLTSASSRGRGGSSRGFGQ. The span at 63–72 shows a compositional bias: low complexity; the sequence is RASLTSASSR. The region spanning 100-179 is the RRM domain; sequence YKCRATGAAK…EFYTSKVPAP (80 aa). LRR repeat units lie at residues 245-270 and 271-294; these read NIVA…SIAK and FVME…FAGL. Residues 365-526 enclose the NTF2 domain; the sequence is LVEQFVTSYF…VAVISDQLFI (162 aa). A TAP-C domain is found at 576 to 628; that stretch reads PIREEMIKAMCQFSGMIPPFSEKCLADCAWNFDFACQKFNEIKSSVPAEAFAH.

Belongs to the NXF family. As to quaternary structure, interacts with nucleoporins, Nup98, Nup153 and Nup214.

The protein resides in the nucleus. Functionally, involved in RNA export from the nucleus to the cytoplasm. The protein is Nuclear RNA export factor 1 (nxf-1) of Caenorhabditis elegans.